Here is a 367-residue protein sequence, read N- to C-terminus: Ribosome-binding ATPase YchF (367 aa).

In terms of domain architecture, OBG-type G spans 2–258 (LSAGIVGLPN…LKLEQRQYFL (257 aa)). Residue 11–16 (NVGKST) coordinates ATP. The Mg(2+) site is built by S15 and T35. In terms of domain architecture, TGS spans 281 to 364 (NLWSFFTFGK…KDGDVCNFKF (84 aa)).

Belongs to the TRAFAC class OBG-HflX-like GTPase superfamily. OBG GTPase family. YchF/OLA1 subfamily. Requires Mg(2+) as cofactor.

ATPase that binds to both the 70S ribosome and the 50S ribosomal subunit in a nucleotide-independent manner. In Mycoplasma genitalium (strain ATCC 33530 / DSM 19775 / NCTC 10195 / G37) (Mycoplasmoides genitalium), this protein is Ribosome-binding ATPase YchF.